A 207-amino-acid polypeptide reads, in one-letter code: Large ribosomal subunit protein uL4 (207 aa).

The tract at residues 43–85 (SRRQGTHDTKGRSEVRGGGRKPWKQKGTGRARQGSIRSPQWVG) is disordered. Residues 47 to 59 (GTHDTKGRSEVRG) are compositionally biased toward basic and acidic residues. Residues 60–71 (GGRKPWKQKGTG) show a composition bias toward basic residues.

It belongs to the universal ribosomal protein uL4 family. Part of the 50S ribosomal subunit.

Its function is as follows. One of the primary rRNA binding proteins, this protein initially binds near the 5'-end of the 23S rRNA. It is important during the early stages of 50S assembly. It makes multiple contacts with different domains of the 23S rRNA in the assembled 50S subunit and ribosome. Forms part of the polypeptide exit tunnel. The polypeptide is Large ribosomal subunit protein uL4 (Exiguobacterium sibiricum (strain DSM 17290 / CCUG 55495 / CIP 109462 / JCM 13490 / 255-15)).